Consider the following 844-residue polypeptide: DNA mismatch repair protein MutS (844 aa).

610–617 (GPNMGGKS) lines the ATP pocket.

The protein belongs to the DNA mismatch repair MutS family.

Functionally, this protein is involved in the repair of mismatches in DNA. It is possible that it carries out the mismatch recognition step. This protein has a weak ATPase activity. This is DNA mismatch repair protein MutS from Francisella tularensis subsp. tularensis (strain WY96-3418).